The chain runs to 456 residues: Phosphoglucomutase/phosphomannomutase (456 aa).

Ser101 serves as the catalytic Phosphoserine intermediate. Positions 101, 243, 245, and 247 each coordinate Mg(2+). Position 101 is a phosphoserine; by autocatalysis (Ser101).

The protein belongs to the phosphohexose mutase family. Homotetramer. Requires Mg(2+) as cofactor. Post-translationally, activated by phosphorylation.

It carries out the reaction alpha-D-glucose 1-phosphate = alpha-D-glucose 6-phosphate. The catalysed reaction is alpha-D-mannose 1-phosphate = D-mannose 6-phosphate. Functionally, catalyzes the interconversion of glucose 1-phosphate and glucose 6-phosphate, and the interconversion of mannose 1-phosphate and mannose 6-phosphate. Also displays low activity with deoxyribose 1-phosphate and glucosamine 1-phosphate. This is Phosphoglucomutase/phosphomannomutase from Thermococcus kodakarensis (strain ATCC BAA-918 / JCM 12380 / KOD1) (Pyrococcus kodakaraensis (strain KOD1)).